The following is a 372-amino-acid chain: Glutamate 5-kinase (372 aa).

Lys-14 is an ATP binding site. Substrate is bound by residues Ser-54, Asp-141, and Asn-153. Residue 173–174 participates in ATP binding; that stretch reads TD. The PUA domain maps to 280-358; that stretch reads RGTLVLDEGA…DAIVGVLGYM (79 aa).

Belongs to the glutamate 5-kinase family.

Its subcellular location is the cytoplasm. The enzyme catalyses L-glutamate + ATP = L-glutamyl 5-phosphate + ADP. It functions in the pathway amino-acid biosynthesis; L-proline biosynthesis; L-glutamate 5-semialdehyde from L-glutamate: step 1/2. Functionally, catalyzes the transfer of a phosphate group to glutamate to form L-glutamate 5-phosphate. The sequence is that of Glutamate 5-kinase from Pseudomonas fluorescens (strain ATCC BAA-477 / NRRL B-23932 / Pf-5).